Reading from the N-terminus, the 1676-residue chain is Protein TIC 214 (1676 aa).

6 helical membrane passes run 23 to 43, 71 to 91, 96 to 116, 145 to 165, 179 to 199, and 226 to 246; these read AGPLIILGIYYGFLITLPIAP, GILIAAISGLTVSQLAFFLSI, LYMIWLKPHLLTLLVLPYMFF, AFLDSFLFQALNPVLLPSPVM, VSLFILGTAIGWLGGQIMFVL, and IFPPIVFGLCLAYMGRAPVSF.

It belongs to the TIC214 family. In terms of assembly, part of the Tic complex.

Its subcellular location is the plastid. It is found in the chloroplast inner membrane. Involved in protein precursor import into chloroplasts. May be part of an intermediate translocation complex acting as a protein-conducting channel at the inner envelope. The chain is Protein TIC 214 from Zygnema circumcarinatum (Green alga).